Here is a 359-residue protein sequence, read N- to C-terminus: Peptide chain release factor 1 (359 aa).

Gln235 carries the post-translational modification N5-methylglutamine. Residues 283–294 (SKADEERSESRK) show a composition bias toward basic and acidic residues. The interval 283 to 309 (SKADEERSESRKSQVGSGDRSERIRTY) is disordered.

The protein belongs to the prokaryotic/mitochondrial release factor family. Post-translationally, methylated by PrmC. Methylation increases the termination efficiency of RF1.

The protein localises to the cytoplasm. In terms of biological role, peptide chain release factor 1 directs the termination of translation in response to the peptide chain termination codons UAG and UAA. The polypeptide is Peptide chain release factor 1 (Mesorhizobium japonicum (strain LMG 29417 / CECT 9101 / MAFF 303099) (Mesorhizobium loti (strain MAFF 303099))).